The chain runs to 205 residues: MPASVTPSITGLLLAGGRATRMDGADKGLQLLDGTPLALHVLRRLAGQVDEMVISANRNADRYAELGAPFGARVVPDETLDFAGPLAGLLAGMRAARAPLVVCAPCDTPSLPTDLVARLHAAFDAHRADIAMAVTVDAQHARSPQPTFALLRTSLADDLAAALAAGERKVRAWYARHKTVEVEFRDERAFYNANSWQELAALARR.

Residues 14-16 (LAG), lysine 27, aspartate 77, and aspartate 107 each bind GTP. Residue aspartate 107 coordinates Mg(2+).

Belongs to the MobA family. Monomer. Mg(2+) is required as a cofactor.

The protein localises to the cytoplasm. The enzyme catalyses Mo-molybdopterin + GTP + H(+) = Mo-molybdopterin guanine dinucleotide + diphosphate. Its function is as follows. Transfers a GMP moiety from GTP to Mo-molybdopterin (Mo-MPT) cofactor (Moco or molybdenum cofactor) to form Mo-molybdopterin guanine dinucleotide (Mo-MGD) cofactor. This is Molybdenum cofactor guanylyltransferase from Burkholderia vietnamiensis (strain G4 / LMG 22486) (Burkholderia cepacia (strain R1808)).